Consider the following 519-residue polypeptide: Pleckstrin homology domain-containing family A member 8 (519 aa).

The PH domain maps to 1–93 (MEGVLYKWTN…WLVALGSAKA (93 aa)). Threonine 139 is subject to Phosphothreonine. At serine 145 the chain carries Phosphoserine. Threonine 153 is subject to Phosphothreonine. The tract at residues 275–302 (GEENLESHDKDPAQPGSDSVCSPESPWE) is disordered. Residues 330–473 (IPTEAFLASC…EDFVAALTIK (144 aa)) form a glycolipid transfer protein homology domain region.

Homodimer. Interacts with ARF1; the interaction together with phosphatidylinositol 4-phosphate binding is required for FAPP2 GlcCer transfer ability.

It localises to the golgi apparatus. It is found in the trans-Golgi network membrane. The protein resides in the membrane. In terms of biological role, cargo transport protein that is required for apical transport from the trans-Golgi network (TGN). Transports AQP2 from the trans-Golgi network (TGN) to sites of AQP2 phosphorylation. Mediates the non-vesicular transport of glucosylceramide (GlcCer) from the trans-Golgi network (TGN) to the plasma membrane and plays a pivotal role in the synthesis of complex glycosphingolipids. Binding of both phosphatidylinositol 4-phosphate (PIP) and ARF1 are essential for the GlcCer transfer ability. Also required for primary cilium formation, possibly by being involved in the transport of raft lipids to the apical membrane, and for membrane tubulation. The chain is Pleckstrin homology domain-containing family A member 8 (Plekha8) from Mus musculus (Mouse).